The following is a 216-amino-acid chain: MPSANFRLARRGLLFVISSPSGAGKSTIARRILAEDDEIHLSVSVTTRPKRPGEVDGVDYHFVDVPTFKKMVAENQLLEWAHVFDNRYGTPRAPVEEMLHKGQDVLFDIDWQGAQQLWQQASGDTIRVYILPPSFEELERRLRGRGTDSEEVIQKRMARAASEISHWDGYDYVLINDDMDECVKQVKNILTVERIKRRRQIGLIGFTRKLLAPPED.

A Guanylate kinase-like domain is found at 12 to 191; that stretch reads GLLFVISSPS…CVKQVKNILT (180 aa). 19–26 serves as a coordination point for ATP; sequence SPSGAGKS.

The protein belongs to the guanylate kinase family.

The protein resides in the cytoplasm. It carries out the reaction GMP + ATP = GDP + ADP. Its function is as follows. Essential for recycling GMP and indirectly, cGMP. The protein is Guanylate kinase of Zymomonas mobilis subsp. mobilis (strain ATCC 31821 / ZM4 / CP4).